The chain runs to 186 residues: Peptidoglycan-recognition protein SD (186 aa).

Positions 1–18 are cleaved as a signal peptide; it reads MTWIGLLIVGLTAIAVQG. The region spanning 47–169 is the N-acetylmuramoyl-L-alanine amidase domain; the sequence is AVIAHTAGGA…RQVSATKSPG (123 aa). An intrachain disulfide couples Cys57 to Cys63. The N-linked (GlcNAc...) asparagine glycan is linked to Asn181.

It belongs to the N-acetylmuramoyl-L-alanine amidase 2 family. As to expression, in larvae, it is mainly expressed in fat body. Also expressed in uninduced hemocytes and mbn-2 cells.

It is found in the secreted. Peptidoglycan-recognition protein that plays a key role in innate immunity by binding to peptidoglycans (PGN) of Gram-positive bacteria and activating the Toll pathway. Has no activity against on Gram-negative bacteria and fungi. Shows some partial redundancy with PRPGP-SA in Gram-positive bacteria recognition. May act by activating the proteolytic cleavage of Spatzle and the subsequent activation of Toll pathway. Recognizes S.aureus PGN. This chain is Peptidoglycan-recognition protein SD (PGRP-SD), found in Drosophila melanogaster (Fruit fly).